The chain runs to 505 residues: Cell division control protein 6 homolog B (505 aa).

Positions 37-72 (KRKMRSDSAAVSGNSVSTPKKLKSHLPSSVPNPGMS) are disordered. The segment covering 45 to 54 (AAVSGNSVST) has biased composition (polar residues).

The protein belongs to the CDC6/cdc18 family.

The protein resides in the nucleus. May be involved in the initiation of DNA replication. This is Cell division control protein 6 homolog B from Arabidopsis thaliana (Mouse-ear cress).